The following is a 249-amino-acid chain: Pyridoxine 5'-phosphate synthase (249 aa).

Position 7 (N7) interacts with 3-amino-2-oxopropyl phosphate. 9-10 contributes to the 1-deoxy-D-xylulose 5-phosphate binding site; that stretch reads DH. Residue R18 participates in 3-amino-2-oxopropyl phosphate binding. The active-site Proton acceptor is H43. Residues R45 and H50 each contribute to the 1-deoxy-D-xylulose 5-phosphate site. E70 acts as the Proton acceptor in catalysis. T100 is a binding site for 1-deoxy-D-xylulose 5-phosphate. The Proton donor role is filled by H190. Residues G191 and 212–213 each bind 3-amino-2-oxopropyl phosphate; that span reads GH.

It belongs to the PNP synthase family. As to quaternary structure, homooctamer; tetramer of dimers.

It is found in the cytoplasm. It catalyses the reaction 3-amino-2-oxopropyl phosphate + 1-deoxy-D-xylulose 5-phosphate = pyridoxine 5'-phosphate + phosphate + 2 H2O + H(+). It functions in the pathway cofactor biosynthesis; pyridoxine 5'-phosphate biosynthesis; pyridoxine 5'-phosphate from D-erythrose 4-phosphate: step 5/5. Functionally, catalyzes the complicated ring closure reaction between the two acyclic compounds 1-deoxy-D-xylulose-5-phosphate (DXP) and 3-amino-2-oxopropyl phosphate (1-amino-acetone-3-phosphate or AAP) to form pyridoxine 5'-phosphate (PNP) and inorganic phosphate. In Synechococcus sp. (strain CC9605), this protein is Pyridoxine 5'-phosphate synthase.